The following is a 46-amino-acid chain: Phospholipase A2 superbin c (46 aa).

Residues Y28, G30, and G32 each contribute to the Ca(2+) site. C29 and C45 form a disulfide bridge.

Requires Ca(2+) as cofactor. In terms of tissue distribution, expressed by the venom gland.

The protein resides in the secreted. The enzyme catalyses a 1,2-diacyl-sn-glycero-3-phosphocholine + H2O = a 1-acyl-sn-glycero-3-phosphocholine + a fatty acid + H(+). Snake venom phospholipase A2 (PLA2) that inhibits collagen-induced platelet aggregation. In terms of inhibition of platelet aggregation, superbin c is more potent as superbin d. PLA2 catalyzes the calcium-dependent hydrolysis of the 2-acyl groups in 3-sn-phosphoglycerides. The chain is Phospholipase A2 superbin c from Austrelaps superbus (Lowland copperhead snake).